The primary structure comprises 703 residues: Methionine--tRNA ligase (703 aa).

A 'HIGH' region motif is present at residues 15-25 (PYANGPVHLGH). Zn(2+) contacts are provided by Cys147, Cys150, Cys160, and Cys163. Positions 345–349 (KFSKS) match the 'KMSKS' region motif. Lys348 is an ATP binding site. The tRNA-binding domain occupies 602–703 (DFQKIDLRVA…GEGINGNSVS (102 aa)).

The protein belongs to the class-I aminoacyl-tRNA synthetase family. MetG type 1 subfamily. Homodimer. Requires Zn(2+) as cofactor.

It localises to the cytoplasm. It catalyses the reaction tRNA(Met) + L-methionine + ATP = L-methionyl-tRNA(Met) + AMP + diphosphate. Is required not only for elongation of protein synthesis but also for the initiation of all mRNA translation through initiator tRNA(fMet) aminoacylation. The sequence is that of Methionine--tRNA ligase from Chlorobaculum tepidum (strain ATCC 49652 / DSM 12025 / NBRC 103806 / TLS) (Chlorobium tepidum).